The following is a 189-amino-acid chain: MSIKSDKWIRRMAEEHNMIEPFAPNQVRATEDGRKIVSYGTSSYGYDIRCADEFKIFTNINSTIVDPKNFDEKSFVDFKGDVCIIPPNSFALARTVEYFRIPRSVLTVCLGKSTYARCGIIVNVTPFEPEWEGHVTLEFSNTTPLPAKIYANEGVAQVLFFESDEICDVSYADRGGKYQGQHGVTLPKT.

DCTP-binding positions include 112 to 117 (KSTYAR), 136 to 138 (TLE), Gln157, Tyr171, and Gln181. Glu138 functions as the Proton donor/acceptor in the catalytic mechanism.

Belongs to the dCTP deaminase family. As to quaternary structure, homotrimer.

The enzyme catalyses dCTP + H2O + H(+) = dUTP + NH4(+). It functions in the pathway pyrimidine metabolism; dUMP biosynthesis; dUMP from dCTP (dUTP route): step 1/2. Its function is as follows. Catalyzes the deamination of dCTP to dUTP. This Paraburkholderia phymatum (strain DSM 17167 / CIP 108236 / LMG 21445 / STM815) (Burkholderia phymatum) protein is dCTP deaminase.